The primary structure comprises 203 residues: Dephospho-CoA kinase (203 aa).

The DPCK domain maps to 3 to 201; sequence SVGLTGGIGS…QRYLGYAAAA (199 aa). ATP is bound at residue 11 to 16; sequence GSGKTT.

The protein belongs to the CoaE family.

Its subcellular location is the cytoplasm. The catalysed reaction is 3'-dephospho-CoA + ATP = ADP + CoA + H(+). It functions in the pathway cofactor biosynthesis; coenzyme A biosynthesis; CoA from (R)-pantothenate: step 5/5. In terms of biological role, catalyzes the phosphorylation of the 3'-hydroxyl group of dephosphocoenzyme A to form coenzyme A. This chain is Dephospho-CoA kinase, found in Burkholderia thailandensis (strain ATCC 700388 / DSM 13276 / CCUG 48851 / CIP 106301 / E264).